The chain runs to 226 residues: Ribonuclease 3 (226 aa).

The region spanning 6-128 (INRLQRKLGY…LIGGVFLDSD (123 aa)) is the RNase III domain. Glutamate 41 is a binding site for Mg(2+). The active site involves aspartate 45. Residues aspartate 114 and glutamate 117 each coordinate Mg(2+). Glutamate 117 is a catalytic residue. The region spanning 155–225 (DPKTRLQEYL…AEQALKKLEL (71 aa)) is the DRBM domain.

It belongs to the ribonuclease III family. Homodimer. The cofactor is Mg(2+).

The protein resides in the cytoplasm. The enzyme catalyses Endonucleolytic cleavage to 5'-phosphomonoester.. Functionally, digests double-stranded RNA. Involved in the processing of primary rRNA transcript to yield the immediate precursors to the large and small rRNAs (23S and 16S). Processes some mRNAs, and tRNAs when they are encoded in the rRNA operon. Processes pre-crRNA and tracrRNA of type II CRISPR loci if present in the organism. This chain is Ribonuclease 3, found in Klebsiella pneumoniae (strain 342).